The primary structure comprises 727 residues: MNDWHEFNAAIKSIYCNAEGDSSSIINRLVGLAMKSEDSTFIEAVLVLKENVSKVDKQLRFLWLTSTINSRFYPPIPISEASPVSWNKTEYCAPGTEELQRRYPGRAKLQNEEDYSGGIEQCRDVPDCSLVASLINLRSKNLNLPLIKQISSTKYHVNLSFNGSNKRLVTVDISQIPTSVDGKQLSLKSNDISDKIGELALLLVSKGTYSTDGSNISIDTYRLSGFLPEITQVNSYPFEKLWKFHKSNLCLMGAGTGNRSNDMIKPLVENHDYSIIDITYDSRLVKLRDPRNSALNVEISYEQYLKNFKQLYLNWNQEKLFKRSQVLHFRYDTSRYNKFSIVADKPLFHLVNNSKVTETVWLLLESHLQDEGSQENRSVSFLNEAPECIICPIEPPVECGGNHIGLQLVKLRLDAETERLLYCYSTTNNNFSIHSFSVVKEICFQRLKDTKSLFAKVLFSFPYEIEGKASFDTCNFFQNPTFELEVHSEQDYQVLMDAACISTSSHDLINIQVYYFNDYELIKPIMFDNHYQPGQGLKQDVPILTNVKYMIVCSTYGPPASTEFELLASIRLSSSWRLISGITLRSVNLIYGTYPYHCRNRFHWKETSDKLKIQMTLPTKKYSTNKLFIRVVPVESSARLRMRCNIFEPESALCVYECQEYRTCPSGGIVIPDLEVSRTNIVVLMIERSVPISSCLPTEGQLDELELFVGSSQKIRIEKYSDDVIPK.

Residues 70-317 enclose the Calpain catalytic domain; that stretch reads SRFYPPIPIS…FKQLYLNWNQ (248 aa). Catalysis depends on residues C128, H271, and N296.

The protein belongs to the peptidase C2 family. PalB/RIM13 subfamily. Interacts with SNF7, which may act together with RIM20 as a scaffold to recruit RIM13 to its substrate RIM101.

In terms of biological role, required for the proteolytic cleavage of the transcriptional repressor RIM101 in response to alkaline ambient pH, which is necessary for sporulation and invasive growth. Probably the protease that cleaves RIM101. In Saccharomyces cerevisiae (strain ATCC 204508 / S288c) (Baker's yeast), this protein is Calpain-like protease 1 (RIM13).